The chain runs to 71 residues: Exodeoxyribonuclease 7 small subunit (71 aa).

This sequence belongs to the XseB family. As to quaternary structure, heterooligomer composed of large and small subunits.

The protein resides in the cytoplasm. The catalysed reaction is Exonucleolytic cleavage in either 5'- to 3'- or 3'- to 5'-direction to yield nucleoside 5'-phosphates.. Bidirectionally degrades single-stranded DNA into large acid-insoluble oligonucleotides, which are then degraded further into small acid-soluble oligonucleotides. This chain is Exodeoxyribonuclease 7 small subunit, found in Streptococcus uberis (strain ATCC BAA-854 / 0140J).